Here is a 177-residue protein sequence, read N- to C-terminus: Probable adenylyl-sulfate kinase (177 aa).

An ATP-binding site is contributed by 12–19 (GLSGAGKT). Ser86 acts as the Phosphoserine intermediate in catalysis.

The protein belongs to the APS kinase family.

It catalyses the reaction adenosine 5'-phosphosulfate + ATP = 3'-phosphoadenylyl sulfate + ADP + H(+). It participates in sulfur metabolism; hydrogen sulfide biosynthesis; sulfite from sulfate: step 2/3. Catalyzes the synthesis of activated sulfate. The protein is Probable adenylyl-sulfate kinase (cysC) of Synechocystis sp. (strain ATCC 27184 / PCC 6803 / Kazusa).